Reading from the N-terminus, the 940-residue chain is UvrABC system protein A (940 aa).

ATP is bound at residue 32–39; it reads GLSGSGKS. A C4-type zinc finger spans residues 252 to 279; that stretch reads CIDCGISIDEISPRLFSFNSPFGKCDYC. 2 ABC transporter domains span residues 309-589 and 609-937; these read WANT…EGSL and SNGK…HYLK. 641-648 is an ATP binding site; that stretch reads GVSGSGKS. A C4-type zinc finger spans residues 740–766; it reads CEACKGDGIIKIEMQFLSDVYVPCEIC.

This sequence belongs to the ABC transporter superfamily. UvrA family. As to quaternary structure, forms a heterotetramer with UvrB during the search for lesions.

The protein resides in the cytoplasm. In terms of biological role, the UvrABC repair system catalyzes the recognition and processing of DNA lesions. UvrA is an ATPase and a DNA-binding protein. A damage recognition complex composed of 2 UvrA and 2 UvrB subunits scans DNA for abnormalities. When the presence of a lesion has been verified by UvrB, the UvrA molecules dissociate. This is UvrABC system protein A from Clostridium tetani (strain Massachusetts / E88).